Reading from the N-terminus, the 243-residue chain is Probable transcriptional regulator ycf27 (243 aa).

The 114-residue stretch at lysine 7–leucine 120 folds into the Response regulatory domain. Position 56 is a 4-aspartylphosphate (aspartate 56). The H-T-H motif DNA-binding region spans aspartate 76–glycine 94. Residues serine 135 to arginine 236 constitute a DNA-binding region (ompR/PhoB-type).

The protein resides in the plastid. The protein localises to the chloroplast. Its function is as follows. Probable promoter-specific protein mediating the interaction between DNA and RNA polymerase. The sequence is that of Probable transcriptional regulator ycf27 (ycf27) from Pyropia yezoensis (Susabi-nori).